The chain runs to 395 residues: S-adenosylmethionine synthase (395 aa).

His16 serves as a coordination point for ATP. Asp18 is a Mg(2+) binding site. Residue Glu44 coordinates K(+). L-methionine is bound by residues Glu57 and Gln100. The flexible loop stretch occupies residues 100–110 (QSPDIAQGVDD). ATP contacts are provided by residues 174–176 (DAK), 241–242 (RF), Asp250, 256–257 (RK), Ala273, and Lys277. Residue Asp250 participates in L-methionine binding. Lys281 provides a ligand contact to L-methionine.

It belongs to the AdoMet synthase family. In terms of assembly, homotetramer; dimer of dimers. Requires Mg(2+) as cofactor. The cofactor is K(+).

Its subcellular location is the cytoplasm. It catalyses the reaction L-methionine + ATP + H2O = S-adenosyl-L-methionine + phosphate + diphosphate. Its pathway is amino-acid biosynthesis; S-adenosyl-L-methionine biosynthesis; S-adenosyl-L-methionine from L-methionine: step 1/1. Catalyzes the formation of S-adenosylmethionine (AdoMet) from methionine and ATP. The overall synthetic reaction is composed of two sequential steps, AdoMet formation and the subsequent tripolyphosphate hydrolysis which occurs prior to release of AdoMet from the enzyme. This Limosilactobacillus reuteri (strain DSM 20016) (Lactobacillus reuteri) protein is S-adenosylmethionine synthase.